Reading from the N-terminus, the 299-residue chain is Nucleotide-binding protein SAV_6292 (299 aa).

23–30 contributes to the ATP binding site; the sequence is GMSGAGRS. 74 to 77 lines the GTP pocket; the sequence is DVRG.

It belongs to the RapZ-like family.

In terms of biological role, displays ATPase and GTPase activities. The chain is Nucleotide-binding protein SAV_6292 from Streptomyces avermitilis (strain ATCC 31267 / DSM 46492 / JCM 5070 / NBRC 14893 / NCIMB 12804 / NRRL 8165 / MA-4680).